Consider the following 296-residue polypeptide: Arginase (296 aa).

Mn(2+)-binding residues include histidine 98, aspartate 124, histidine 126, and aspartate 128. The L-arginine site is built by asparagine 130, serine 137, and aspartate 178. Mn(2+)-binding residues include aspartate 225 and aspartate 227. L-arginine is bound by residues aspartate 227 and threonine 239.

The protein belongs to the arginase family. As to quaternary structure, monomer. Homodimer; dimerization is dispensable for catalytic activity. Requires Mn(2+) as cofactor.

The catalysed reaction is L-arginine + H2O = urea + L-ornithine. It participates in nitrogen metabolism; urea cycle; L-ornithine and urea from L-arginine: step 1/1. Substitution of the loosely bound surface exposed Mn(2+) with Mg(2+), Zn(2+), Ni(2+) or Co(2+) results in similar catalytic activity, substitution with Cd(2+) and Cu(2+) reduces catalytic activity and substitution with Hg(2+) and Ca(2+) inhibits the enzyme. Inhibited by L-norvaline. In terms of biological role, catalyzes the hydrolysis of L-arginine into urea and L-ornithine, which is a precursor for polyamine biosynthesis. By depleting host L-arginine, a substrate for nitric oxide synthase (NOS), prevents the production of nitric oxide (NO) by host activated macrophages, and thus allows the parasite to evade host immune response. The protein is Arginase of Entamoeba histolytica (strain ATCC 30459 / HM-1:IMSS / ABRM).